Here is a 440-residue protein sequence, read N- to C-terminus: Adenylosuccinate synthetase (440 aa).

GTP-binding positions include 13–19 (GDEGKGK) and 41–43 (GHT). Residue Asp-14 is the Proton acceptor of the active site. Mg(2+) is bound by residues Asp-14 and Gly-41. IMP contacts are provided by residues 14–17 (DEGK), 39–42 (NAGH), Thr-135, Arg-149, Gln-230, Thr-245, and Arg-313. The active-site Proton donor is the His-42. Position 309-315 (309-315 (TVTKRKR)) interacts with substrate. Residues Arg-315, 341 to 343 (KLD), and 423 to 425 (STG) each bind GTP.

This sequence belongs to the adenylosuccinate synthetase family. As to quaternary structure, homodimer. Mg(2+) serves as cofactor.

The protein localises to the cytoplasm. The catalysed reaction is IMP + L-aspartate + GTP = N(6)-(1,2-dicarboxyethyl)-AMP + GDP + phosphate + 2 H(+). It functions in the pathway purine metabolism; AMP biosynthesis via de novo pathway; AMP from IMP: step 1/2. Functionally, plays an important role in the de novo pathway of purine nucleotide biosynthesis. Catalyzes the first committed step in the biosynthesis of AMP from IMP. The protein is Adenylosuccinate synthetase of Methylobacillus flagellatus (strain ATCC 51484 / DSM 6875 / VKM B-1610 / KT).